A 426-amino-acid polypeptide reads, in one-letter code: GTPase Obg (426 aa).

One can recognise an Obg domain in the interval 1–158; that stretch reads MFVDQVSVYV…RNIKVELKLI (158 aa). Disordered regions lie at residues 66–86 and 119–146; these read GKRG…DPLV and GGRG…GEPG. Positions 159–329 constitute an OBG-type G domain; that stretch reads ADVGLVGFPS…LLFAIADKLE (171 aa). GTP-binding positions include 165-172, 190-194, 212-215, 282-285, and 310-312; these read GFPSVGKS, FTTLS, DLPG, NKMD, and SAL. Ser-172 and Thr-192 together coordinate Mg(2+). Residues 348-426 enclose the OCT domain; sequence RYQKEEDPFH…LLEYEFEFIE (79 aa).

This sequence belongs to the TRAFAC class OBG-HflX-like GTPase superfamily. OBG GTPase family. As to quaternary structure, monomer. It depends on Mg(2+) as a cofactor.

The protein resides in the cytoplasm. Functionally, an essential GTPase which binds GTP, GDP and possibly (p)ppGpp with moderate affinity, with high nucleotide exchange rates and a fairly low GTP hydrolysis rate. Plays a role in control of the cell cycle, stress response, ribosome biogenesis and in those bacteria that undergo differentiation, in morphogenesis control. The protein is GTPase Obg of Oceanobacillus iheyensis (strain DSM 14371 / CIP 107618 / JCM 11309 / KCTC 3954 / HTE831).